A 659-amino-acid polypeptide reads, in one-letter code: ATP-binding cassette sub-family D member 3 (659 aa).

Residues 2–61 (AAFSKYLTARNSSLAGAAFLLFCLLHKRRRALGLHGKKSGKPPLQNNEKEGKKERAVVDK) form an interaction with PEX19 region. Asn-12 is a glycosylation site (N-linked (GlcNAc...) asparagine). Lys-61 bears the N6-acetyllysine mark. The chain crosses the membrane as a helical span at residues 84 to 104 (GYLILIAVMLVSRTYCDVWMI). The region spanning 85–372 (YLILIAVMLV…MLLRMSQALG (288 aa)) is the ABC transmembrane type-1 domain. N-linked (GlcNAc...) asparagine glycosylation occurs at Asn-106. The helical transmembrane segment at 126–146 (LFNFIAAMPLISLVNNFLKYG) threads the bilayer. N-linked (GlcNAc...) asparagine glycosylation is present at Asn-206. A helical membrane pass occupies residues 224–244 (AIGAQGPASMMAYLLVSGLFL). N6-acetyllysine is present on Lys-260. The helical transmembrane segment at 313-333 (MGFIDSIIAKYIATVVGYLVV) threads the bilayer. Lys-399 is modified (N6-acetyllysine). Residue Ser-424 is modified to Phosphoserine. Positions 434-659 (INADNIIKFD…ITEDTVEFGS (226 aa)) constitute an ABC transporter domain. Position 473–480 (473–480 (GPNGCGKS)) interacts with ATP. Lys-533 is subject to N6-acetyllysine. The residue at position 659 (Ser-659) is a Phosphoserine.

Belongs to the ABC transporter superfamily. ABCD family. Peroxisomal fatty acyl CoA transporter (TC 3.A.1.203) subfamily. In terms of assembly, homodimers. Can form heterodimers with ABCD1 and ABCD2. Dimerization is necessary to form an active transporter. Interacts with PEX19; mediates the targeting of ABCD3 to peroxisomes. Ubiquitinated by PEX2 during pexophagy in response to starvation, leading to its degradation.

The protein localises to the peroxisome membrane. The catalysed reaction is a very long-chain fatty acyl-CoA + H2O = a very long-chain fatty acid + CoA + H(+). It carries out the reaction a very long-chain fatty acid(in) + ATP + H2O = a very long-chain fatty acid(out) + ADP + phosphate + H(+). The enzyme catalyses a long-chain fatty acyl-CoA + H2O = a long-chain fatty acid + CoA + H(+). It catalyses the reaction a long-chain fatty acid(in) + ATP + H2O = a long-chain fatty acid(out) + ADP + phosphate + H(+). The catalysed reaction is pristanoyl-CoA + H2O = 2,6,10,14-tetramethylpentadecanoate + CoA + H(+). It carries out the reaction 2,6,10,14-tetramethylpentadecanoate(in) + ATP + H2O = 2,6,10,14-tetramethylpentadecanoate(out) + ADP + phosphate + H(+). The enzyme catalyses hexadecanedioyl-CoA + H2O = hexadecanedioate + CoA + H(+). It catalyses the reaction hexadecanedioate(in) + ATP + H2O = hexadecanedioate(out) + ADP + phosphate + H(+). The catalysed reaction is (5Z,8Z,11Z,14Z,17Z)-eicosapentaenoyl-CoA + H2O = (5Z,8Z,11Z,14Z,17Z)-eicosapentaenoate + CoA + H(+). It carries out the reaction (5Z,8Z,11Z,14Z,17Z)-eicosapentaenoate(in) + ATP + H2O = (5Z,8Z,11Z,14Z,17Z)-eicosapentaenoate(out) + ADP + phosphate + H(+). The enzyme catalyses (4Z,7Z,10Z,13Z,16Z,19Z)-docosahexaenoyl-CoA + H2O = (4Z,7Z,10Z,13Z,16Z,19Z)-docosahexaenoate + CoA + H(+). It catalyses the reaction (4Z,7Z,10Z,13Z,16Z,19Z)-docosahexaenoate(in) + ATP + H2O = (4Z,7Z,10Z,13Z,16Z,19Z)-docosahexaenoate(out) + ADP + phosphate + H(+). In terms of biological role, broad substrate specificity ATP-dependent transporter of the ATP-binding cassette (ABC) family that catalyzes the transport of long-chain fatty acids (LCFA)-CoA, dicarboxylic acids-CoA, long-branched-chain fatty acids-CoA and bile acids from the cytosol to the peroxisome lumen for beta-oxydation. Has fatty acyl-CoA thioesterase and ATPase activities. Probably hydrolyzes fatty acyl-CoAs into free fatty acids prior to their ATP-dependent transport into peroxisomes. Thus, play a role in regulation of LCFAs and energy metabolism namely, in the degradation and biosynthesis of fatty acids by beta-oxidation. The sequence is that of ATP-binding cassette sub-family D member 3 (Abcd3) from Rattus norvegicus (Rat).